We begin with the raw amino-acid sequence, 351 residues long: Biotin synthase (351 aa).

The Radical SAM core domain maps to 49–265 (NRVRIHILDN…LSVFRLVNPD (217 aa)). Residues cysteine 64, cysteine 68, and cysteine 71 each coordinate [4Fe-4S] cluster. Cysteine 108, cysteine 140, cysteine 200, and arginine 269 together coordinate [2Fe-2S] cluster.

Belongs to the radical SAM superfamily. Biotin synthase family. In terms of assembly, homodimer. [4Fe-4S] cluster serves as cofactor. The cofactor is [2Fe-2S] cluster.

The enzyme catalyses (4R,5S)-dethiobiotin + (sulfur carrier)-SH + 2 reduced [2Fe-2S]-[ferredoxin] + 2 S-adenosyl-L-methionine = (sulfur carrier)-H + biotin + 2 5'-deoxyadenosine + 2 L-methionine + 2 oxidized [2Fe-2S]-[ferredoxin]. The protein operates within cofactor biosynthesis; biotin biosynthesis; biotin from 7,8-diaminononanoate: step 2/2. In terms of biological role, catalyzes the conversion of dethiobiotin (DTB) to biotin by the insertion of a sulfur atom into dethiobiotin via a radical-based mechanism. The sequence is that of Biotin synthase from Leptospira biflexa serovar Patoc (strain Patoc 1 / Ames).